A 465-amino-acid polypeptide reads, in one-letter code: Ribulose bisphosphate carboxylase large chain (465 aa).

Lys-4 is modified (N6,N6,N6-trimethyllysine). Asn-113 and Thr-163 together coordinate substrate. Lys-165 serves as the catalytic Proton acceptor. Lys-167 contributes to the substrate binding site. Residues Lys-191, Asp-193, and Glu-194 each contribute to the Mg(2+) site. The residue at position 191 (Lys-191) is an N6-carboxylysine. Residue His-284 is the Proton acceptor of the active site. Residues Arg-285, His-317, and Ser-369 each coordinate substrate.

Belongs to the RuBisCO large chain family. Type I subfamily. As to quaternary structure, heterohexadecamer of 8 large chains and 8 small chains; disulfide-linked. The disulfide link is formed within the large subunit homodimers. Mg(2+) serves as cofactor. In terms of processing, the disulfide bond which can form in the large chain dimeric partners within the hexadecamer appears to be associated with oxidative stress and protein turnover.

The protein localises to the plastid. It is found in the chloroplast. It catalyses the reaction 2 (2R)-3-phosphoglycerate + 2 H(+) = D-ribulose 1,5-bisphosphate + CO2 + H2O. The enzyme catalyses D-ribulose 1,5-bisphosphate + O2 = 2-phosphoglycolate + (2R)-3-phosphoglycerate + 2 H(+). Functionally, ruBisCO catalyzes two reactions: the carboxylation of D-ribulose 1,5-bisphosphate, the primary event in carbon dioxide fixation, as well as the oxidative fragmentation of the pentose substrate in the photorespiration process. Both reactions occur simultaneously and in competition at the same active site. This Ailanthus altissima (Tree-of-heaven) protein is Ribulose bisphosphate carboxylase large chain.